The following is a 211-amino-acid chain: ATP phosphoribosyltransferase (211 aa).

This sequence belongs to the ATP phosphoribosyltransferase family. Short subfamily. Heteromultimer composed of HisG and HisZ subunits.

It is found in the cytoplasm. The catalysed reaction is 1-(5-phospho-beta-D-ribosyl)-ATP + diphosphate = 5-phospho-alpha-D-ribose 1-diphosphate + ATP. It participates in amino-acid biosynthesis; L-histidine biosynthesis; L-histidine from 5-phospho-alpha-D-ribose 1-diphosphate: step 1/9. Functionally, catalyzes the condensation of ATP and 5-phosphoribose 1-diphosphate to form N'-(5'-phosphoribosyl)-ATP (PR-ATP). Has a crucial role in the pathway because the rate of histidine biosynthesis seems to be controlled primarily by regulation of HisG enzymatic activity. The chain is ATP phosphoribosyltransferase from Bacillus cereus (strain ATCC 10987 / NRS 248).